Consider the following 957-residue polypeptide: Leucine--tRNA ligase (957 aa).

Positions 70-81 match the 'HIGH' region motif; it reads PYPSGAGLHVGH. Residues 727 to 731 carry the 'KMSKS' region motif; it reads KMGKS. Residue Lys-730 participates in ATP binding.

It belongs to the class-I aminoacyl-tRNA synthetase family.

It is found in the cytoplasm. It catalyses the reaction tRNA(Leu) + L-leucine + ATP = L-leucyl-tRNA(Leu) + AMP + diphosphate. The protein is Leucine--tRNA ligase of Corynebacterium efficiens (strain DSM 44549 / YS-314 / AJ 12310 / JCM 11189 / NBRC 100395).